The chain runs to 443 residues: Zinc finger protein ZIC 1 (443 aa).

The C2H2-type 1; atypical zinc finger occupies 221–256 (LICKWIEPEQLANPKKSCNKTFSTMHELVTHVTVEH). The segment at 265-292 (HICVWEECPREGKPFKAKYKLINHIRVH) adopts a C2H2-type 2; atypical zinc-finger fold. C2H2-type zinc fingers lie at residues 298 to 322 (FPCP…KRTH), 328 to 352 (FKCE…MHVH), and 358 to 380 (YLCK…MKVH). The disordered stretch occupies residues 371-433 (SSLRKHMKVH…AVHHTSNHST (63 aa)). A compositionally biased stretch (low complexity) spans 383-396 (SSQGSQPSPAASSG). The segment covering 397 to 413 (YESSTPPTIVSPSAENQ) has biased composition (polar residues). Positions 408–443 (PSAENQSTSSLSPSSSAVHHTSNHSTLSSNFNEWYV) are negatively regulates transcriptional activity. Residues 414-433 (STSSLSPSSSAVHHTSNHST) show a composition bias toward low complexity.

It belongs to the GLI C2H2-type zinc-finger protein family. In terms of tissue distribution, during early gastrula stages, widely expressed in the dorsal ectoderm. At mid-gastrula, expressed throughout the presumptive neural plate and at late gastrula, expression gradually diminishes in the dorsal midline and increases in the anterior folds. By early neurula stage, expression becomes restricted to the lateral edges of the neural plate, corresponding to the presumptive dorsal neural plate and neural crest, and in flanking ectoderm. In early tailbud stages (stages 22-23), expressed in the dorsal forebrain, midbrain and hindbrain. Subsequently expressed in the telencephalon and at the diencephalon/mesencephalon boundary. In the spinal cord, expression is restricted to the dorsal most region including the roof plate. Also expressed in the somites but not in eye vesicles. At larval stages, expressed mainly in the dorsal neural tube throughout its anteroposterior axis.

It is found in the nucleus. Its subcellular location is the cytoplasm. Functionally, transcriptional activator that induces expression of multiple genes including pax3, en2, snai2/slug, feb and a subset of wnt genes. Has multiple key roles in the regulation of neural induction and neurogenesis: acts as a neural competence factor, sensitizing the presumptive neuroectoderm to respond to subsequent neuralizing signals. Promotes both preplacodal cell fates and neural crest cell fates, two of the cell populations that arise from the neural plate border. Cooperates with pax3 in concert with wnt signaling to determine neural crest fate. Synergizes with the bmp-inhibitor noggin/nog and acts through the wnt pathway to induce expression of en2. May bind to the minimal GLI-consensus sequence 5'-TGGGTGGTC-3'. The chain is Zinc finger protein ZIC 1 (zic1) from Xenopus laevis (African clawed frog).